The sequence spans 443 residues: Mitochondrial enolase superfamily member 1 (443 aa).

Substrate-binding positions include 24-26 (GAD) and Tyr-34. Ser-148 bears the Phosphoserine mark. Lys-220 serves as a coordination point for substrate. Residue Lys-222 is the Proton donor/acceptor of the active site. Asp-250 provides a ligand contact to Mg(2+). Substrate-binding positions include Asn-252, Glu-276, Glu-305, 355-357 (HAG), and Glu-386. Positions 276 and 305 each coordinate Mg(2+). His-355 is a catalytic residue.

Belongs to the mandelate racemase/muconate lactonizing enzyme family. ENOSF1 subfamily. Mg(2+) is required as a cofactor. Post-translationally, could be sumoylated.

The protein resides in the mitochondrion. The catalysed reaction is L-fuconate = 2-dehydro-3-deoxy-L-fuconate + H2O. In terms of biological role, plays a role in the catabolism of L-fucose, a sugar that is part of the carbohydrates that are attached to cellular glycoproteins. Catalyzes the dehydration of L-fuconate to 2-keto-3-deoxy-L-fuconate by the abstraction of the 2-proton to generate an enediolate intermediate that is stabilized by the magnesium ion. The polypeptide is Mitochondrial enolase superfamily member 1 (ENOSF1) (Homo sapiens (Human)).